The following is a 235-amino-acid chain: Protein Thf1 (235 aa).

Positions 179-228 (LNLSSDKLQKDLDLYRSNVDKMGQLLAVIEDALEAERKKREKAKQEVATT) form a coiled coil.

It belongs to the THF1 family.

In terms of biological role, may be involved in photosynthetic membrane biogenesis. This is Protein Thf1 from Rippkaea orientalis (strain PCC 8801 / RF-1) (Cyanothece sp. (strain PCC 8801)).